Here is a 673-residue protein sequence, read N- to C-terminus: DNA ligase (673 aa).

NAD(+)-binding positions include 33–37 (DHQYD), 83–84 (SL), and Glu117. Lys119 (N6-AMP-lysine intermediate) is an active-site residue. Arg140, Glu175, Lys282, and Lys306 together coordinate NAD(+). The Zn(2+) site is built by Cys400, Cys403, Cys418, and Cys424. Residues 592 to 673 (RGSSAISGKT…WVKMVEDARS (82 aa)) form the BRCT domain.

Belongs to the NAD-dependent DNA ligase family. LigA subfamily. Mg(2+) serves as cofactor. The cofactor is Mn(2+).

It carries out the reaction NAD(+) + (deoxyribonucleotide)n-3'-hydroxyl + 5'-phospho-(deoxyribonucleotide)m = (deoxyribonucleotide)n+m + AMP + beta-nicotinamide D-nucleotide.. Its function is as follows. DNA ligase that catalyzes the formation of phosphodiester linkages between 5'-phosphoryl and 3'-hydroxyl groups in double-stranded DNA using NAD as a coenzyme and as the energy source for the reaction. It is essential for DNA replication and repair of damaged DNA. The chain is DNA ligase from Anaplasma marginale (strain Florida).